Consider the following 290-residue polypeptide: Phosphatidylglycerol--prolipoprotein diacylglyceryl transferase (290 aa).

The next 7 membrane-spanning stretches (helical) occupy residues 21-41 (VALH…MWLA), 60-80 (LLYA…VLFY), 96-116 (WDGG…MVIF), 124-144 (FFQV…AGRL), 198-218 (SQLY…NLFI), 225-245 (GSVS…VEFF), and 260-280 (ISMG…MMIW). Arg-143 is an a 1,2-diacyl-sn-glycero-3-phospho-(1'-sn-glycerol) binding site.

The protein belongs to the Lgt family.

The protein resides in the cell inner membrane. It catalyses the reaction L-cysteinyl-[prolipoprotein] + a 1,2-diacyl-sn-glycero-3-phospho-(1'-sn-glycerol) = an S-1,2-diacyl-sn-glyceryl-L-cysteinyl-[prolipoprotein] + sn-glycerol 1-phosphate + H(+). It functions in the pathway protein modification; lipoprotein biosynthesis (diacylglyceryl transfer). In terms of biological role, catalyzes the transfer of the diacylglyceryl group from phosphatidylglycerol to the sulfhydryl group of the N-terminal cysteine of a prolipoprotein, the first step in the formation of mature lipoproteins. The chain is Phosphatidylglycerol--prolipoprotein diacylglyceryl transferase from Enterobacter sp. (strain 638).